Reading from the N-terminus, the 579-residue chain is Nuclear receptor coactivator 5 (579 aa).

The residue at position 1 (methionine 1) is an N-acetylmethionine. A disordered region spans residues 1–78; that stretch reads MNTAPSRPSP…LRDHRDSRSV (78 aa). Residues 1–158 are transcription repression; sequence MNTAPSRPSP…RDSFDGRGPP (158 aa). Threonine 3 carries the phosphothreonine modification. Residues serine 9, serine 21, serine 24, serine 29, and serine 34 each carry the phosphoserine modification. Composition is skewed to basic and acidic residues over residues 11–62 and 68–78; these read TRRD…DLRD and DLRDHRDSRSV. A phosphoserine mark is found at serine 96, serine 116, serine 126, serine 143, and serine 151. The interval 148-173 is disordered; the sequence is YRDSFDGRGPPGPESQSRAKERLKRE. Residues 164–173 are compositionally biased toward basic and acidic residues; the sequence is SRAKERLKRE. Threonine 274 is subject to Phosphothreonine. The LXXLL motif signature appears at 345-349; sequence LINLL. Disordered regions lie at residues 375–428, 444–537, and 560–579; these read MRSS…PTSQ, VTAN…NFDN, and QTTAQMGQPQAPMGSYQRHY. Residue serine 378 is modified to Phosphoserine. Threonine 379 carries the phosphothreonine modification. A Phosphoserine modification is found at serine 381. Polar residues predominate over residues 395–413; it reads SGASLKTQPSSQPLQSGQV. Low complexity predominate over residues 446-457; sequence ANSSSASPSVAA. Residues 458–579 form a transcription activation region; the sequence is GNTPNQNFST…APMGSYQRHY (122 aa). 2 stretches are compositionally biased toward polar residues: residues 459–485 and 520–537; these read NTPNQNFSTAANSQPQQRSQASGNQPP and SNMTSQRPVSSTGINFDN.

As to quaternary structure, binds HTATIP2/TIP30. Interacts with YLPM1. Forms a complex with ILF2, ILF3, YLPM1, KHDRBS1, RBMX and PPP1CA. As to expression, widely expressed.

Its subcellular location is the nucleus. Nuclear receptor coregulator that can have both coactivator and corepressor functions. Interacts with nuclear receptors for steroids (ESR1 and ESR2) independently of the steroid binding domain (AF-2) of the ESR receptors, and with the orphan nuclear receptor NR1D2. Involved in the coactivation of nuclear steroid receptors (ER) as well as the corepression of MYC in response to 17-beta-estradiol (E2). This Homo sapiens (Human) protein is Nuclear receptor coactivator 5 (NCOA5).